The sequence spans 223 residues: Lipoprotein signal peptidase (223 aa).

The tract at residues 1–20 is disordered; it reads MNSAKVNPSGHAPTPAPTAS. Helical transmembrane passes span 32–52, 65–85, 91–111, and 116–136; these read LFFGLAIAGGALDLWSKEAIF, WIIEGYFGIETAVNIGAVFGL, LVFAAISVFAAAAIIAWLFFF, and SCWLTFALGCITGGIIGNLYD. Residues D156 and D175 contribute to the active site. Residues 173-193 traverse the membrane as a helical segment; the sequence is IADSLLVTGAIMLLVQSFFFP. The tract at residues 196–223 is disordered; that stretch reads PHGEADGNELPGRRAPDEPTEGTKPAAS.

This sequence belongs to the peptidase A8 family.

Its subcellular location is the cell inner membrane. It catalyses the reaction Release of signal peptides from bacterial membrane prolipoproteins. Hydrolyzes -Xaa-Yaa-Zaa-|-(S,diacylglyceryl)Cys-, in which Xaa is hydrophobic (preferably Leu), and Yaa (Ala or Ser) and Zaa (Gly or Ala) have small, neutral side chains.. It functions in the pathway protein modification; lipoprotein biosynthesis (signal peptide cleavage). Functionally, this protein specifically catalyzes the removal of signal peptides from prolipoproteins. This Rhodopirellula baltica (strain DSM 10527 / NCIMB 13988 / SH1) protein is Lipoprotein signal peptidase.